A 177-amino-acid chain; its full sequence is Adenine phosphoribosyltransferase (177 aa).

It belongs to the purine/pyrimidine phosphoribosyltransferase family. Homodimer.

The protein resides in the cytoplasm. It carries out the reaction AMP + diphosphate = 5-phospho-alpha-D-ribose 1-diphosphate + adenine. The protein operates within purine metabolism; AMP biosynthesis via salvage pathway; AMP from adenine: step 1/1. Its function is as follows. Catalyzes a salvage reaction resulting in the formation of AMP, that is energically less costly than de novo synthesis. This is Adenine phosphoribosyltransferase from Chlorobaculum parvum (strain DSM 263 / NCIMB 8327) (Chlorobium vibrioforme subsp. thiosulfatophilum).